The following is a 376-amino-acid chain: Succinyl-diaminopimelate desuccinylase (376 aa).

Position 67 (histidine 67) interacts with Zn(2+). Residue aspartate 69 is part of the active site. Aspartate 100 serves as a coordination point for Zn(2+). The Proton acceptor role is filled by glutamate 134. Residues glutamate 135, glutamate 163, and histidine 349 each coordinate Zn(2+).

This sequence belongs to the peptidase M20A family. DapE subfamily. As to quaternary structure, homodimer. The cofactor is Zn(2+). Co(2+) serves as cofactor.

The enzyme catalyses N-succinyl-(2S,6S)-2,6-diaminopimelate + H2O = (2S,6S)-2,6-diaminopimelate + succinate. It functions in the pathway amino-acid biosynthesis; L-lysine biosynthesis via DAP pathway; LL-2,6-diaminopimelate from (S)-tetrahydrodipicolinate (succinylase route): step 3/3. Functionally, catalyzes the hydrolysis of N-succinyl-L,L-diaminopimelic acid (SDAP), forming succinate and LL-2,6-diaminopimelate (DAP), an intermediate involved in the bacterial biosynthesis of lysine and meso-diaminopimelic acid, an essential component of bacterial cell walls. The chain is Succinyl-diaminopimelate desuccinylase from Shewanella denitrificans (strain OS217 / ATCC BAA-1090 / DSM 15013).